Consider the following 161-residue polypeptide: Large ribosomal subunit protein uL10 (161 aa).

Belongs to the universal ribosomal protein uL10 family. As to quaternary structure, part of the ribosomal stalk of the 50S ribosomal subunit. The N-terminus interacts with L11 and the large rRNA to form the base of the stalk. The C-terminus forms an elongated spine to which L12 dimers bind in a sequential fashion forming a multimeric L10(L12)X complex.

Its function is as follows. Forms part of the ribosomal stalk, playing a central role in the interaction of the ribosome with GTP-bound translation factors. This is Large ribosomal subunit protein uL10 (rplJ) from Wigglesworthia glossinidia brevipalpis.